Reading from the N-terminus, the 106-residue chain is Transcription initiation factor IIA subunit 2 (106 aa).

This sequence belongs to the TFIIA subunit 2 family. TFIIA is a heterodimer of the large unprocessed subunit 1 and a small subunit gamma. It was originally believed to be a heterotrimer of an alpha, a beta and a gamma subunit.

It is found in the nucleus. Functionally, TFIIA is a component of the transcription machinery of RNA polymerase II and plays an important role in transcriptional activation. TFIIA in a complex with TBP mediates transcriptional activity. Protein involved in the resistance to X.oryzae. The polypeptide is Transcription initiation factor IIA subunit 2 (TFIIAy) (Oryza sativa subsp. indica (Rice)).